Consider the following 403-residue polypeptide: Tripartite motif-containing protein 59 (403 aa).

The RING-type zinc-finger motif lies at 10-60; it reads CPICYSIFEDPRVLPCSHTFCRNCLENVLQASGNFYIWRPLRIPLKCPNCR. The segment at 92–134 adopts a B box-type zinc-finger fold; sequence PDVVTCPEHYRQPLNVYCLLDKKLVCGHCLTIGQHHGHPIDDL. Positions 97, 100, 120, and 126 each coordinate Zn(2+). Residues 163 to 246 adopt a coiled-coil conformation; that stretch reads LIEKLEEQKC…TITTSLQDES (84 aa). A helical transmembrane segment spans residues 329-349; it reads ILNIAIVSLISVILMLILLFN.

It belongs to the TRIM/RBCC family. As to quaternary structure, interacts with ECSIT. In terms of tissue distribution, moderately expressed in the spleen, brain and heart and very highly expressed in the testis.

It is found in the endoplasmic reticulum membrane. The enzyme catalyses S-ubiquitinyl-[E2 ubiquitin-conjugating enzyme]-L-cysteine + [acceptor protein]-L-lysine = [E2 ubiquitin-conjugating enzyme]-L-cysteine + N(6)-ubiquitinyl-[acceptor protein]-L-lysine.. The protein operates within protein modification; protein ubiquitination. Functionally, E3 ubiquitin ligase involved in different processes such as development and immune response. Serves as a negative regulator for innate immune signaling pathways by suppressing RLR-induced activation of IRF3/7 and NF-kappa-B via interaction with adapter ECSIT. Regulates autophagy through modulating both the transcription and the ubiquitination of BECN1. On the one hand, regulates the transcription of BECN1 through negatively modulating the NF-kappa-B pathway. On the other hand, regulates TRAF6-mediated 'Lys-63'-linked ubiquitination of BECN1, thus affecting the formation of the BECN1-PIK3C3 complex. In addition, mediates 'Lys-48'-linked ubiquitination of TRAF6 and thereby promotes TRAF6 proteasomal degradation. Also acts as a critical regulator for early embryo development from blastocyst stage to gastrula through modulating F-actin assembly and WASH1 'Lys-63'-linked ubiquitination. The sequence is that of Tripartite motif-containing protein 59 (Trim59) from Mus musculus (Mouse).